The following is a 363-amino-acid chain: Membrane-bound lytic murein transglycosylase C (363 aa).

The signal sequence occupies residues Met-1–Ala-15. The N-palmitoyl cysteine moiety is linked to residue Cys-16. A lipid anchor (S-diacylglycerol cysteine) is attached at Cys-16.

Belongs to the transglycosylase Slt family.

Its subcellular location is the cell outer membrane. It catalyses the reaction Exolytic cleavage of the (1-&gt;4)-beta-glycosidic linkage between N-acetylmuramic acid (MurNAc) and N-acetylglucosamine (GlcNAc) residues in peptidoglycan, from either the reducing or the non-reducing ends of the peptidoglycan chains, with concomitant formation of a 1,6-anhydrobond in the MurNAc residue.. In terms of biological role, murein-degrading enzyme. May play a role in recycling of muropeptides during cell elongation and/or cell division. In Histophilus somni (strain 129Pt) (Haemophilus somnus), this protein is Membrane-bound lytic murein transglycosylase C.